Consider the following 639-residue polypeptide: Extracellular metalloproteinase NpIII (639 aa).

The N-terminal stretch at 1–16 is a signal peptide; it reads MHMLLFIGALALPVFV. The propeptide occupies 17–245; it reads CTQSCEPASL…IHGVVDYVSE (229 aa). N-linked (GlcNAc...) asparagine glycosylation is found at Asn287, Asn320, Asn336, and Asn368. His429 lines the Zn(2+) pocket. Glu430 is an active-site residue. His433 is a Zn(2+) binding site. The N-linked (GlcNAc...) asparagine glycan is linked to Asn509.

The protein belongs to the peptidase M36 family. Zn(2+) serves as cofactor.

The protein localises to the secreted. Secreted metalloproteinase that allows assimilation of proteinaceous substrates. This Aspergillus oryzae (strain ATCC 42149 / RIB 40) (Yellow koji mold) protein is Extracellular metalloproteinase NpIII (NpIII).